Here is a 664-residue protein sequence, read N- to C-terminus: Probable 3',5'-cyclic phosphodiesterase pde-1 (664 aa).

Disordered stretches follow at residues 24 to 60 (TSSA…SIKI) and 113 to 142 (RNQK…KSYD). 2 stretches are compositionally biased toward basic and acidic residues: residues 28–38 (SEEHGDSDKKL) and 114–130 (NQKE…EKEP). The PDEase domain occupies 256 to 634 (VQCPIPPEIA…AHWKERAAKE (379 aa)). The active-site Proton donor is His-333. His-337, His-373, Asp-374, and Asp-480 together coordinate a divalent metal cation. 2 disordered regions span residues 564–597 (DSLF…TSPS) and 630–664 (RAAK…VTTN). Residues 630-644 (RAAKEEEERKIKEAA) show a composition bias toward basic and acidic residues.

The protein belongs to the cyclic nucleotide phosphodiesterase family. Interacts with cmd-1 in the presence of Ca(2+). The cofactor is a divalent metal cation. In terms of tissue distribution, expressed in AFD thermosensory neurons.

The enzyme catalyses a nucleoside 3',5'-cyclic phosphate + H2O = a nucleoside 5'-phosphate + H(+). In terms of biological role, redundantly with pde-5, plays a role in the AFD thermosensory neurons to regulate microvilli receptive ending morphology, possibly by regulating cGMP levels. The sequence is that of Probable 3',5'-cyclic phosphodiesterase pde-1 (pde-1) from Caenorhabditis elegans.